A 758-amino-acid polypeptide reads, in one-letter code: Putative transcriptional regulatory protein YJL206C (758 aa).

A DNA-binding region (zn(2)-C6 fungal-type) is located at residues 47-73 (CIACRKRKVRCSGNIPCRLCQTNSYEC).

It belongs to the ASG1 family.

It is found in the nucleus. In Saccharomyces cerevisiae (strain ATCC 204508 / S288c) (Baker's yeast), this protein is Putative transcriptional regulatory protein YJL206C.